We begin with the raw amino-acid sequence, 282 residues long: NADPH-dependent 7-cyano-7-deazaguanine reductase (282 aa).

88–90 (IES) contributes to the substrate binding site. 90–91 (SK) is a binding site for NADPH. C190 serves as the catalytic Thioimide intermediate. Residue D197 is the Proton donor of the active site. Residue 229 to 230 (HE) coordinates substrate. NADPH is bound at residue 258-259 (RG).

Belongs to the GTP cyclohydrolase I family. QueF type 2 subfamily. As to quaternary structure, homodimer.

It localises to the cytoplasm. The enzyme catalyses 7-aminomethyl-7-carbaguanine + 2 NADP(+) = 7-cyano-7-deazaguanine + 2 NADPH + 3 H(+). The protein operates within tRNA modification; tRNA-queuosine biosynthesis. Catalyzes the NADPH-dependent reduction of 7-cyano-7-deazaguanine (preQ0) to 7-aminomethyl-7-deazaguanine (preQ1). This chain is NADPH-dependent 7-cyano-7-deazaguanine reductase, found in Escherichia coli (strain SMS-3-5 / SECEC).